The sequence spans 246 residues: Pyrroloquinoline-quinone synthase (246 aa).

The protein belongs to the PqqC family.

It carries out the reaction 6-(2-amino-2-carboxyethyl)-7,8-dioxo-1,2,3,4,7,8-hexahydroquinoline-2,4-dicarboxylate + 3 O2 = pyrroloquinoline quinone + 2 H2O2 + 2 H2O + H(+). The protein operates within cofactor biosynthesis; pyrroloquinoline quinone biosynthesis. Its function is as follows. Ring cyclization and eight-electron oxidation of 3a-(2-amino-2-carboxyethyl)-4,5-dioxo-4,5,6,7,8,9-hexahydroquinoline-7,9-dicarboxylic-acid to PQQ. This is Pyrroloquinoline-quinone synthase from Acidiphilium cryptum (strain JF-5).